Reading from the N-terminus, the 109-residue chain is Nucleoid-associated protein SG0690 (109 aa).

The disordered stretch occupies residues 1–23 (MFGKGGMGNLMKQAQQMQEKMQR).

It belongs to the YbaB/EbfC family. In terms of assembly, homodimer.

Its subcellular location is the cytoplasm. The protein resides in the nucleoid. Its function is as follows. Binds to DNA and alters its conformation. May be involved in regulation of gene expression, nucleoid organization and DNA protection. The sequence is that of Nucleoid-associated protein SG0690 from Sodalis glossinidius (strain morsitans).